The following is a 194-amino-acid chain: Holliday junction branch migration complex subunit RuvA (194 aa).

The tract at residues 1-61 is domain I; sequence MIASLSGLLE…EDSVSLYGFA (61 aa). The segment at 62 to 136 is domain II; sequence SVLECTVFEQ…GKLTSVPLEN (75 aa). The tract at residues 136-140 is flexible linker; that stretch reads NRKQE. The interval 141-194 is domain III; it reads QAVDRSAEIVQALIGLGWQRQESAAAVESVLEKDQSLTMPEILRNALRYLAKQE.

This sequence belongs to the RuvA family. As to quaternary structure, homotetramer. Forms an RuvA(8)-RuvB(12)-Holliday junction (HJ) complex. HJ DNA is sandwiched between 2 RuvA tetramers; dsDNA enters through RuvA and exits via RuvB. An RuvB hexamer assembles on each DNA strand where it exits the tetramer. Each RuvB hexamer is contacted by two RuvA subunits (via domain III) on 2 adjacent RuvB subunits; this complex drives branch migration. In the full resolvosome a probable DNA-RuvA(4)-RuvB(12)-RuvC(2) complex forms which resolves the HJ.

It is found in the cytoplasm. Functionally, the RuvA-RuvB-RuvC complex processes Holliday junction (HJ) DNA during genetic recombination and DNA repair, while the RuvA-RuvB complex plays an important role in the rescue of blocked DNA replication forks via replication fork reversal (RFR). RuvA specifically binds to HJ cruciform DNA, conferring on it an open structure. The RuvB hexamer acts as an ATP-dependent pump, pulling dsDNA into and through the RuvAB complex. HJ branch migration allows RuvC to scan DNA until it finds its consensus sequence, where it cleaves and resolves the cruciform DNA. In Tropheryma whipplei (strain Twist) (Whipple's bacillus), this protein is Holliday junction branch migration complex subunit RuvA.